Consider the following 446-residue polypeptide: tRNA-2-methylthio-N(6)-dimethylallyladenosine synthase (446 aa).

The MTTase N-terminal domain maps to 2–122 (KKAYVKSYGC…LPDLLRQSRE (121 aa)). Residues Cys11, Cys47, Cys85, Cys157, Cys161, and Cys164 each coordinate [4Fe-4S] cluster. The Radical SAM core domain maps to 143-375 (RNRGVTGFLT…QDLLDRQRHA (233 aa)). Residues 378–440 (AASVGTLTEI…SNSLFGETLE (63 aa)) form the TRAM domain.

It belongs to the methylthiotransferase family. MiaB subfamily. As to quaternary structure, monomer. [4Fe-4S] cluster is required as a cofactor.

It is found in the cytoplasm. It catalyses the reaction N(6)-dimethylallyladenosine(37) in tRNA + (sulfur carrier)-SH + AH2 + 2 S-adenosyl-L-methionine = 2-methylsulfanyl-N(6)-dimethylallyladenosine(37) in tRNA + (sulfur carrier)-H + 5'-deoxyadenosine + L-methionine + A + S-adenosyl-L-homocysteine + 2 H(+). In terms of biological role, catalyzes the methylthiolation of N6-(dimethylallyl)adenosine (i(6)A), leading to the formation of 2-methylthio-N6-(dimethylallyl)adenosine (ms(2)i(6)A) at position 37 in tRNAs that read codons beginning with uridine. In Methylorubrum extorquens (strain PA1) (Methylobacterium extorquens), this protein is tRNA-2-methylthio-N(6)-dimethylallyladenosine synthase.